The following is a 483-amino-acid chain: Probable L-xylulose kinase (483 aa).

The protein belongs to the FGGY kinase family. Homodimer.

The enzyme catalyses L-xylulose + ATP = L-xylulose 5-phosphate + ADP + H(+). The chain is Probable L-xylulose kinase (lyx) from Pasteurella multocida (strain Pm70).